A 685-amino-acid polypeptide reads, in one-letter code: Protein arginine N-methyltransferase 7 (685 aa).

2 consecutive SAM-dependent MTase PRMT-type domains span residues glutamine 14 to tryptophan 355 and alanine 364 to isoleucine 685.

The protein belongs to the class I-like SAM-binding methyltransferase superfamily. Protein arginine N-methyltransferase family. PRMT7 subfamily.

In terms of biological role, essential arginine methyltransferase that can both catalyze the formation of omega-N monomethylarginine (MMA) and symmetrical dimethylarginine (sDMA). Specifically mediates the symmetrical dimethylation of arginine residues in the small nuclear ribonucleoproteins SmD1 and SmD3. The polypeptide is Protein arginine N-methyltransferase 7 (Art7) (Drosophila willistoni (Fruit fly)).